Here is a 241-residue protein sequence, read N- to C-terminus: MSMLFYTLITAFLIGIQAEPHSESNVPAGHTIPQAHWTKLQHSLDTALRRARSAPAGPIAARVAGQTRNITVDPKLFKKRRLRSPRVLFSTQPPPEAADTQDLDFEVAGAAPVNRTHRSKRSSSHPIFHRGEFSVCDSVSVWVGDKTTATDIKGKEVMVLGEVNINNSVFKQYFFETKCRDPNPVDSGCRGIDSKHWNSYCTTTHTFVKALTMDGKQAAWRFIRIDTACVCVLSRKASRRA.

An N-terminal signal peptide occupies residues 1 to 18 (MSMLFYTLITAFLIGIQA). Positions 19–121 (EPHSESNVPA…PVNRTHRSKR (103 aa)) are excised as a propeptide. Asparagine 69, asparagine 114, and asparagine 166 each carry an N-linked (GlcNAc...) asparagine glycan. Cystine bridges form between cysteine 136/cysteine 201, cysteine 179/cysteine 229, and cysteine 189/cysteine 231.

The protein belongs to the NGF-beta family. As to quaternary structure, homodimer. The homodimer interacts with a single NTRK1 chain. The homodimer interacts with a single NGFR chain. The NGF dimer interacts with a single SORCS2 chain (via extracellular domain). The NGF precursor (proNGF) binds to a receptor complex formed by SORT1 and NGFR, which leads to NGF endocytosis. Both mature NGF and the immature NGF precursor (proNGF) interact with SORCS2 and with the heterodimer formed by SORCS2 and NGFR (via extracellular domains). The NGF precursor (proNGF) has much higher affinity for SORCS2 than mature NGF. The NGF precursor (proNGF) has much higher affinity for SORT1 than mature NGF. Interacts with ADAM10 in a divalent cation-dependent manner. Interacts with SORCS3.

It is found in the secreted. It localises to the endosome lumen. In terms of biological role, nerve growth factor is important for the development and maintenance of the sympathetic and sensory nervous systems. Extracellular ligand for the NTRK1 and NGFR receptors, activates cellular signaling cascades through those receptor tyrosine kinase to regulate neuronal proliferation, differentiation and survival. Inhibits metalloproteinase dependent proteolysis of platelet glycoprotein VI. This is Beta-nerve growth factor (NGF) from Saimiri boliviensis boliviensis (Bolivian squirrel monkey).